A 492-amino-acid polypeptide reads, in one-letter code: Malonyl-CoA decarboxylase, mitochondrial (492 aa).

The tract at residues M1–R28 is disordered. The transit peptide at M1–A38 directs the protein to the mitochondrion. The interval M39–F189 is alpha-helical domain. Position 58 is an N6-acetyllysine (K58). Position 167 is an N6-acetyllysine; alternate (K167). K167 carries the N6-succinyllysine; alternate modification. Residues S190–L492 form a catalytic domain region. Position 210 is an N6-acetyllysine (K210). Residue K221 is modified to N6-succinyllysine. Malonyl-CoA is bound at residue Q298–T304. K316 bears the N6-acetyllysine mark. S328 provides a ligand contact to malonyl-CoA. The active-site Proton acceptor is S328. K385 is subject to N6-acetyllysine; alternate. K385 bears the N6-succinyllysine; alternate mark. K388 carries the post-translational modification N6-acetyllysine. H422 provides a ligand contact to malonyl-CoA. H422 (proton donor) is an active-site residue. 2 positions are modified to N6-acetyllysine: K441 and K471. The Microbody targeting signal signature appears at S490–L492.

In terms of assembly, homotetramer. Dimer of dimers. The two subunits within a dimer display conformational differences suggesting that at any given moment, only one of the two subunits is competent for malonyl-CoA binding and catalytic activity. Under oxidizing conditions, can form disulfide-linked homotetramers (in vitro). Associates with the peroxisomal targeting signal receptor PEX5. In terms of processing, interchain disulfide bonds may form in peroxisomes (Potential). Interchain disulfide bonds are not expected to form in the reducing environment of the cytoplasm and mitochondria. Post-translationally, acetylation at Lys-471 activates malonyl-CoA decarboxylase activity. Deacetylation at Lys-471 by SIRT4 represses activity, leading to promote lipogenesis.

It localises to the cytoplasm. The protein localises to the mitochondrion matrix. The protein resides in the peroxisome. It is found in the peroxisome matrix. The enzyme catalyses malonyl-CoA + H(+) = acetyl-CoA + CO2. It functions in the pathway metabolic intermediate biosynthesis; acetyl-CoA biosynthesis; acetyl-CoA from malonyl-CoA: step 1/1. Malonyl-CoA decarboxylase activity does not require any cofactors or divalent metal ions. Its function is as follows. Catalyzes the conversion of malonyl-CoA to acetyl-CoA. In the fatty acid biosynthesis MCD selectively removes malonyl-CoA and thus assures that methyl-malonyl-CoA is the only chain elongating substrate for fatty acid synthase and that fatty acids with multiple methyl side chains are produced. In peroxisomes it may be involved in degrading intraperoxisomal malonyl-CoA, which is generated by the peroxisomal beta-oxidation of odd chain-length dicarboxylic fatty acids. Plays a role in the metabolic balance between glucose and lipid oxidation in muscle independent of alterations in insulin signaling. Plays a role in controlling the extent of ischemic injury by promoting glucose oxidation. The sequence is that of Malonyl-CoA decarboxylase, mitochondrial from Mus musculus (Mouse).